The sequence spans 308 residues: Ribosomal RNA small subunit methyltransferase H (308 aa).

Residues 34–36 (GGH), Asp54, Phe80, Asp101, and Gln108 contribute to the S-adenosyl-L-methionine site.

The protein belongs to the methyltransferase superfamily. RsmH family.

It is found in the cytoplasm. It catalyses the reaction cytidine(1402) in 16S rRNA + S-adenosyl-L-methionine = N(4)-methylcytidine(1402) in 16S rRNA + S-adenosyl-L-homocysteine + H(+). In terms of biological role, specifically methylates the N4 position of cytidine in position 1402 (C1402) of 16S rRNA. This Ureaplasma parvum serovar 3 (strain ATCC 27815 / 27 / NCTC 11736) protein is Ribosomal RNA small subunit methyltransferase H.